Consider the following 277-residue polypeptide: Energy-coupling factor transporter ATP-binding protein EcfA1 (277 aa).

Residues 4–238 (IETKNLNYSY…SELLSKNDLK (235 aa)) enclose the ABC transporter domain. 38–45 (GKNGSGKS) is an ATP binding site.

This sequence belongs to the ABC transporter superfamily. Energy-coupling factor EcfA family. In terms of assembly, forms a stable energy-coupling factor (ECF) transporter complex composed of 2 membrane-embedded substrate-binding proteins (S component), 2 ATP-binding proteins (A component) and 2 transmembrane proteins (T component).

It localises to the cell membrane. In terms of biological role, ATP-binding (A) component of a common energy-coupling factor (ECF) ABC-transporter complex. Unlike classic ABC transporters this ECF transporter provides the energy necessary to transport a number of different substrates. The chain is Energy-coupling factor transporter ATP-binding protein EcfA1 from Oenococcus oeni (strain ATCC BAA-331 / PSU-1).